A 472-amino-acid polypeptide reads, in one-letter code: Squamosa promoter-binding-like protein 18 (472 aa).

The segment at 89-110 (AKVPPSTSTLKRPRGGGGGGGG) is disordered. Residues 112-189 (CPSCAVDGCK…DGHNRRRRKP (78 aa)) form an SBP-type zinc finger. 8 residues coordinate Zn(2+): Cys115, Cys120, Cys137, His140, Cys156, Cys159, His163, and Cys175. Positions 172-188 (KRSCRKRLDGHNRRRRK) match the Bipartite nuclear localization signal motif. Disordered stretches follow at residues 179–218 (LDGH…RPEP), 233–261 (SHHH…TAAF), and 358–381 (SVDV…HHHH). The segment covering 192–209 (DSMSSGSFMTSQQGTRFA) has biased composition (polar residues). Low complexity predominate over residues 252–261 (SPSSATTAAF).

Expressed in young panicles.

It localises to the nucleus. Functionally, trans-acting factor that binds specifically to the consensus nucleotide sequence 5'-TNCGTACAA-3'. May be involved in panicle development. In Oryza sativa subsp. japonica (Rice), this protein is Squamosa promoter-binding-like protein 18 (SPL18).